The primary structure comprises 659 residues: MKVRSKKALFCSVSRLLHTERHTERQNLTTLFNRYVDKTDVFSWNSVIADLARSGDSAEALLAFSSMRKLSLYPTRSSFPCAIKACSSLFDIFSGKQTHQQAFVFGYQSDIFVSSALIVMYSTCGKLEDARKVFDEIPKRNIVSWTSMIRGYDLNGNALDAVSLFKDLLVDENDDDDAMFLDSMGLVSVISACSRVPAKGLTESIHSFVIKRGFDRGVSVGNTLLDAYAKGGEGGVAVARKIFDQIVDKDRVSYNSIMSVYAQSGMSNEAFEVFRRLVKNKVVTFNAITLSTVLLAVSHSGALRIGKCIHDQVIRMGLEDDVIVGTSIIDMYCKCGRVETARKAFDRMKNKNVRSWTAMIAGYGMHGHAAKALELFPAMIDSGVRPNYITFVSVLAACSHAGLHVEGWRWFNAMKGRFGVEPGLEHYGCMVDLLGRAGFLQKAYDLIQRMKMKPDSIIWSSLLAACRIHKNVELAEISVARLFELDSSNCGYYMLLSHIYADAGRWKDVERVRMIMKNRGLVKPPGFSLLELNGEVHVFLIGDEEHPQREKIYEFLAELNRKLLEAGYVSNTSSVCHDVDEEEKEMTLRVHSEKLAIAFGIMNTVPGSTVNVVKNLRVCSDCHNVIKLISKIVDREFVVRDAKRFHHFKDGGCSCGDYW.

A mitochondrion-targeting transit peptide spans 1–24 (MKVRSKKALFCSVSRLLHTERHTE). PPR repeat units follow at residues 40–74 (DVFS…SLYP), 75–109 (TRSS…GYQS), 110–144 (DIFV…NIVS), 145–171 (WTSM…LLVD), 182–216 (DSMG…GFDR), 217–249 (GVSV…IVDK), 250–284 (DRVS…KVVT), 286–320 (NAIT…GLED), 321–351 (DVIV…MKNK), 352–386 (NVRS…GVRP), 387–422 (NYIT…GVEP), and 423–453 (GLEH…MKMK). The type E motif stretch occupies residues 458-533 (IWSSLLAACR…PPGFSLLELN (76 aa)). The segment at 534-564 (GEVHVFLIGDEEHPQREKIYEFLAELNRKLL) is type E(+) motif. Residues 565-659 (EAGYVSNTSS…DGGCSCGDYW (95 aa)) form a type DYW motif region.

This sequence belongs to the PPR family. PCMP-H subfamily.

Its subcellular location is the mitochondrion. This chain is Pentatricopeptide repeat-containing protein At3g26782, mitochondrial (PCMP-H34), found in Arabidopsis thaliana (Mouse-ear cress).